Here is a 480-residue protein sequence, read N- to C-terminus: Transposase for transposon Tn552 (480 aa).

Residues 36 to 55 (LSSISKSKGIALSTLYRWNK) constitute a DNA-binding region (H-T-H motif). An Integrase catalytic domain is found at 155-341 (ESSRPNEIWQ…TPINRWNSNH (187 aa)). The interval 438–480 (RKHLKQNIASPSTTDLIKEEKSYGYSPQETTKNVKKLKRYRND) is disordered. Basic residues predominate over residues 470–480 (NVKKLKRYRND).

The sequence is that of Transposase for transposon Tn552 from Staphylococcus aureus.